Consider the following 269-residue polypeptide: Pertussis toxin subunit 1 homolog (269 aa).

A signal peptide spans 1-34 (MRCTRAIRQTARTGWLTWLAILAVTAPMTSPAWA).

The protein belongs to the bacterial exotoxin subunit A family.

In Bordetella parapertussis (strain 12822 / ATCC BAA-587 / NCTC 13253), this protein is Pertussis toxin subunit 1 homolog (ptxA).